Consider the following 134-residue polypeptide: DNA-binding protein StpA (134 aa).

Residues 73–94 (EELLGNSSAAAPRAGKKRQPRP) are disordered. The DNA-binding element occupies 112–117 (QGRTPK).

Belongs to the histone-like protein H-NS family. In terms of assembly, forms homodimers, can interact with H-NS. May interact with Hha and/or Cnu.

It localises to the cytoplasm. The protein localises to the nucleoid. Functionally, a DNA-binding protein that acts in a fashion similar to H-NS, repressing gene transcription. A subset of H-NS/StpA-regulated genes require auxillary proteins for repression; these auxillary proteins (Hha and other similar proteins) may also modulate oligomerization of the H-NS/StpA complex. This chain is DNA-binding protein StpA (stpA), found in Escherichia coli O157:H7.